Consider the following 425-residue polypeptide: Serine--tRNA ligase (425 aa).

An L-serine-binding site is contributed by 232-234; that stretch reads TSE. Residues 263–265 and Val279 each bind ATP; that span reads RRE. Glu286 is an L-serine binding site. 350 to 353 provides a ligand contact to ATP; that stretch reads EVVS. An L-serine-binding site is contributed by Thr387.

This sequence belongs to the class-II aminoacyl-tRNA synthetase family. Type-1 seryl-tRNA synthetase subfamily. As to quaternary structure, homodimer. The tRNA molecule binds across the dimer.

The protein resides in the cytoplasm. The enzyme catalyses tRNA(Ser) + L-serine + ATP = L-seryl-tRNA(Ser) + AMP + diphosphate + H(+). It carries out the reaction tRNA(Sec) + L-serine + ATP = L-seryl-tRNA(Sec) + AMP + diphosphate + H(+). It functions in the pathway aminoacyl-tRNA biosynthesis; selenocysteinyl-tRNA(Sec) biosynthesis; L-seryl-tRNA(Sec) from L-serine and tRNA(Sec): step 1/1. Its function is as follows. Catalyzes the attachment of serine to tRNA(Ser). Is also able to aminoacylate tRNA(Sec) with serine, to form the misacylated tRNA L-seryl-tRNA(Sec), which will be further converted into selenocysteinyl-tRNA(Sec). The chain is Serine--tRNA ligase from Methanoregula boonei (strain DSM 21154 / JCM 14090 / 6A8).